Consider the following 240-residue polypeptide: NAD(P)H-hydrate epimerase (240 aa).

One can recognise a YjeF N-terminal domain in the interval 15–224 (AQEIDAELMG…SYNLKLPCYP (210 aa)). Position 66–70 (66–70 (NQGGD)) interacts with (6S)-NADPHX. K(+)-binding residues include Q67 and D129. (6S)-NADPHX-binding positions include 133–139 (GFSFHSE) and D162. S165 contributes to the K(+) binding site.

It belongs to the NnrE/AIBP family. K(+) serves as cofactor.

Its subcellular location is the cytoplasm. The protein resides in the mitochondrion. The enzyme catalyses (6R)-NADHX = (6S)-NADHX. It catalyses the reaction (6R)-NADPHX = (6S)-NADPHX. Its function is as follows. Catalyzes the epimerization of the S- and R-forms of NAD(P)HX, a damaged form of NAD(P)H that is a result of enzymatic or heat-dependent hydration. This is a prerequisite for the S-specific NAD(P)H-hydrate dehydratase to allow the repair of both epimers of NAD(P)HX. The protein is NAD(P)H-hydrate epimerase of Puccinia graminis f. sp. tritici (strain CRL 75-36-700-3 / race SCCL) (Black stem rust fungus).